The sequence spans 148 residues: SsrA-binding protein (148 aa).

Residues 129 to 142 are compositionally biased toward basic and acidic residues; that stretch reads ETEKKRDWEREKAR. Positions 129–148 are disordered; sequence ETEKKRDWEREKARIMRAGT.

The protein belongs to the SmpB family.

The protein localises to the cytoplasm. Required for rescue of stalled ribosomes mediated by trans-translation. Binds to transfer-messenger RNA (tmRNA), required for stable association of tmRNA with ribosomes. tmRNA and SmpB together mimic tRNA shape, replacing the anticodon stem-loop with SmpB. tmRNA is encoded by the ssrA gene; the 2 termini fold to resemble tRNA(Ala) and it encodes a 'tag peptide', a short internal open reading frame. During trans-translation Ala-aminoacylated tmRNA acts like a tRNA, entering the A-site of stalled ribosomes, displacing the stalled mRNA. The ribosome then switches to translate the ORF on the tmRNA; the nascent peptide is terminated with the 'tag peptide' encoded by the tmRNA and targeted for degradation. The ribosome is freed to recommence translation, which seems to be the essential function of trans-translation. In Burkholderia orbicola (strain AU 1054), this protein is SsrA-binding protein.